A 470-amino-acid polypeptide reads, in one-letter code: uncharacterized protein (470 aa).

A disordered region spans residues 439–470 (SIKSSKSKKQLKSSKSKKPIKHTKTKNIYVET). Over residues 443 to 463 (SKSKKQLKSSKSKKPIKHTKT) the composition is skewed to basic residues.

This is an uncharacterized protein from Acanthamoeba polyphaga mimivirus (APMV).